Here is a 231-residue protein sequence, read N- to C-terminus: Aquaporin Z (231 aa).

2 consecutive transmembrane segments (helical) span residues 11–31 (FLGT…AAAF) and 36–56 (IGLL…AFAI). The NPA 1 motif lies at 65-67 (NPA). The next 3 helical transmembrane spans lie at 84–104 (LPYI…LYLI), 132–152 (MISV…VILG), and 161–181 (GFAP…SIPI). The NPA 2 signature appears at 187–189 (NPA). A helical membrane pass occupies residues 203–223 (VSQLWLFWAAPIIGAILAGVI).

The protein belongs to the MIP/aquaporin (TC 1.A.8) family. In terms of assembly, homotetramer.

The protein resides in the cell inner membrane. The enzyme catalyses H2O(in) = H2O(out). Channel that permits osmotically driven movement of water in both directions. It is involved in the osmoregulation and in the maintenance of cell turgor during volume expansion in rapidly growing cells. It mediates rapid entry or exit of water in response to abrupt changes in osmolarity. The polypeptide is Aquaporin Z (Shewanella oneidensis (strain ATCC 700550 / JCM 31522 / CIP 106686 / LMG 19005 / NCIMB 14063 / MR-1)).